The primary structure comprises 130 residues: Small ribosomal subunit protein uS9 (130 aa).

Belongs to the universal ribosomal protein uS9 family.

This Burkholderia mallei (strain NCTC 10247) protein is Small ribosomal subunit protein uS9.